The following is a 187-amino-acid chain: ATP synthase subunit b (187 aa).

A helical membrane pass occupies residues Asn32–Gly52.

The protein belongs to the ATPase B chain family. As to quaternary structure, F-type ATPases have 2 components, F(1) - the catalytic core - and F(0) - the membrane proton channel. F(1) has five subunits: alpha(3), beta(3), gamma(1), delta(1), epsilon(1). F(0) has four main subunits: a(1), b(1), b'(1) and c(10-14). The alpha and beta chains form an alternating ring which encloses part of the gamma chain. F(1) is attached to F(0) by a central stalk formed by the gamma and epsilon chains, while a peripheral stalk is formed by the delta, b and b' chains.

It localises to the cellular thylakoid membrane. F(1)F(0) ATP synthase produces ATP from ADP in the presence of a proton or sodium gradient. F-type ATPases consist of two structural domains, F(1) containing the extramembraneous catalytic core and F(0) containing the membrane proton channel, linked together by a central stalk and a peripheral stalk. During catalysis, ATP synthesis in the catalytic domain of F(1) is coupled via a rotary mechanism of the central stalk subunits to proton translocation. Functionally, component of the F(0) channel, it forms part of the peripheral stalk, linking F(1) to F(0). This chain is ATP synthase subunit b, found in Trichormus variabilis (strain ATCC 29413 / PCC 7937) (Anabaena variabilis).